The sequence spans 192 residues: Glycerol-3-phosphate acyltransferase (192 aa).

5 helical membrane passes run 4–24 (MFWLLATFAYLLGSLSFAILL), 54–74 (LAVLTLLGDLCKGLIPVVLAG), 80–100 (PSQQGWIGVCAVLGHLFPLYF), 112–132 (AGVLLGLYPPAAALAIAAWLL), and 154–174 (LLAWQEPHALLPMSVLTLLIV).

Belongs to the PlsY family. As to quaternary structure, probably interacts with PlsX.

It localises to the cell inner membrane. The enzyme catalyses an acyl phosphate + sn-glycerol 3-phosphate = a 1-acyl-sn-glycero-3-phosphate + phosphate. It participates in lipid metabolism; phospholipid metabolism. Functionally, catalyzes the transfer of an acyl group from acyl-phosphate (acyl-PO(4)) to glycerol-3-phosphate (G3P) to form lysophosphatidic acid (LPA). This enzyme utilizes acyl-phosphate as fatty acyl donor, but not acyl-CoA or acyl-ACP. The polypeptide is Glycerol-3-phosphate acyltransferase (Pseudomonas syringae pv. tomato (strain ATCC BAA-871 / DC3000)).